Consider the following 287-residue polypeptide: Nucleotide-binding protein mma_3120 (287 aa).

ATP is bound at residue 8 to 15; that stretch reads GISGSGKS. 57-60 contacts GTP; sequence DARS.

This sequence belongs to the RapZ-like family.

In terms of biological role, displays ATPase and GTPase activities. The sequence is that of Nucleotide-binding protein mma_3120 from Janthinobacterium sp. (strain Marseille) (Minibacterium massiliensis).